The sequence spans 496 residues: Probable malate:quinone oxidoreductase (496 aa).

Belongs to the MQO family. FAD is required as a cofactor.

It carries out the reaction (S)-malate + a quinone = a quinol + oxaloacetate. Its pathway is carbohydrate metabolism; tricarboxylic acid cycle; oxaloacetate from (S)-malate (quinone route): step 1/1. The protein is Probable malate:quinone oxidoreductase of Prochlorococcus marinus (strain MIT 9303).